The chain runs to 338 residues: Mitochondrial glutathione transporter SLC25A40 (338 aa).

3 Solcar repeats span residues 13 to 131 (VTPL…LTAL), 139 to 223 (NESR…LKKW), and 233 to 327 (PTFM…GKSF). The next 6 helical transmembrane spans lie at 19 to 39 (MFAS…FDVV), 103 to 123 (LWSG…IYFT), 145 to 165 (IVAG…LELI), 199 to 220 (WAPT…YEVL), 239 to 259 (FTSG…FDVV), and 298 to 318 (GLFT…AVMI).

Belongs to the mitochondrial carrier (TC 2.A.29) family.

The protein localises to the mitochondrion inner membrane. The catalysed reaction is glutathione(in) = glutathione(out). Functionally, probable mitochondrial transporter required for glutathione import into mitochondria. Glutathione, which plays key roles in oxidative metabolism, is produced exclusively in the cytosol and is imported in many organelles. Mitochondrial glutathione is required for the activity and stability of proteins containing iron-sulfur clusters, as well as erythropoiesis. This is Mitochondrial glutathione transporter SLC25A40 from Bos taurus (Bovine).